Consider the following 360-residue polypeptide: Peptide chain release factor 1 (360 aa).

Q237 is subject to N5-methylglutamine.

It belongs to the prokaryotic/mitochondrial release factor family. Methylated by PrmC. Methylation increases the termination efficiency of RF1.

The protein localises to the cytoplasm. Peptide chain release factor 1 directs the termination of translation in response to the peptide chain termination codons UAG and UAA. The chain is Peptide chain release factor 1 from Stutzerimonas stutzeri (strain A1501) (Pseudomonas stutzeri).